The following is a 335-amino-acid chain: Probable nicotianamine synthase 2 (335 aa).

It belongs to the nicotianamine synthase (NAS)-like family.

The enzyme catalyses 3 S-adenosyl-L-methionine = nicotianamine + 3 S-methyl-5'-thioadenosine + 3 H(+). Synthesizes nicotianamine, a polyamine that is the first intermediate in the synthesis of the phytosiderophores of the mugineic acid type found in gramineae which serves as a sensor for the physiological iron status within the plant, and/or might be involved in the transport of iron. In Hordeum vulgare (Barley), this protein is Probable nicotianamine synthase 2 (NAS2).